The sequence spans 217 residues: Glutathione S-transferase B (217 aa).

The GST N-terminal domain occupies 1–87 (PMTLGYWNIR…YIARKHNLCG (87 aa)). Glutathione-binding positions include 6–7 (YW), 45–49 (WLNEK), 58–59 (NL), and 71–72 (QS). Positions 89–207 (TEEETIRMDI…KSSRFLPKPL (119 aa)) constitute a GST C-terminal domain. Tyr-115 contacts substrate.

The protein belongs to the GST superfamily. Mu family. Homodimer.

The protein localises to the cytoplasm. The catalysed reaction is RX + glutathione = an S-substituted glutathione + a halide anion + H(+). It carries out the reaction prostaglandin A2 + glutathione = prostaglandin A2-S-(R)-glutathione. The enzyme catalyses prostaglandin J2 + glutathione = prostaglandin J2-S-(R)-glutathione. It catalyses the reaction prostaglandin J2 + glutathione = prostaglandin J2-S-(S)-glutathione. The catalysed reaction is prostaglandin A2 + glutathione = prostaglandin A2-S-(S)-glutathione. It carries out the reaction 11(S)-hydroxy-14(S),15(S)-epoxy-(5Z,8Z,12E)-eicosatrienoate + glutathione = (11S,15S)-dihydroxy-14(R)-S-glutathionyl-(5Z,8Z,12E)-eicosatrienoate. Conjugation of reduced glutathione to a wide number of exogenous and endogenous hydrophobic electrophiles. Involved in the formation of glutathione conjugates of both prostaglandin A2 (PGA2) and prostaglandin J2 (PGJ2). Participates in the formation of novel hepoxilin regioisomers. The chain is Glutathione S-transferase B (GSTM1) from Cavia porcellus (Guinea pig).